The sequence spans 1156 residues: Nuclear pore-associated protein 1 (1156 aa).

Disordered regions lie at residues 1–60 (MGNL…RRPS), 155–204 (EGPR…FRCS), 219–266 (NSMS…PEPA), 481–515 (GGSYNSVVGAAPLTSDPPTPPSSTPSFKPPVTRES), 680–703 (TLVNSASTASSSKPPIETNAMHTT), 732–786 (NTQP…KTSL), 872–915 (STSF…SSFI), and 1026–1046 (APGPSSTSGELNIGQGQSGTP). Over residues 50–59 (LFRRNARRRP) the composition is skewed to basic residues. Positions 156–165 (GPRRVKKDED) are enriched in basic and acidic residues. Polar residues-rich tracts occupy residues 179–197 (PLSSGEASSTSRSQGTQGD) and 219–231 (NSMSEKAQASPAS). Composition is skewed to polar residues over residues 680 to 692 (TLVNSASTASSSK), 732 to 750 (NTQPSGNTASVQGSTSLPA), 884 to 915 (TTTSSHPLNTGSISHSTLGATDGQQKSDSSFI), and 1028 to 1046 (GPSSTSGELNIGQGQSGTP).

Associates with the nuclear pore complex (NPC). Testis-specific in adults. In fetal brain expressed only from the paternal allele.

The protein resides in the nucleus. It is found in the nucleoplasm. Its subcellular location is the nucleus inner membrane. Its function is as follows. May be involved in spermatogenesis. This Homo sapiens (Human) protein is Nuclear pore-associated protein 1 (NPAP1).